A 120-amino-acid chain; its full sequence is uncharacterized protein (120 aa).

Residues 40 to 62 (SFLTDALLNLIYILFFSSSVFNW) form a helical membrane-spanning segment.

Its subcellular location is the membrane. This is an uncharacterized protein from Saccharomyces cerevisiae (strain ATCC 204508 / S288c) (Baker's yeast).